Reading from the N-terminus, the 138-residue chain is LAVCVSLIGAANIPPQHLNLYQFKEMIRYTIPCEKTWLEYTDYGCYCGYGGSGTPVDALDRCCYVHDNCYGDAEKKHKCNPKMQLYSYKLTKRTIICYGAAGTCERIVCDCDRTAALCFGNSEYIERHKNIDTKRYCR.

Positions 1–10 (LAVCVSLIGA) are cleaved as a signal peptide. A propeptide spanning residues 11 to 18 (ANIPPQHL) is cleaved from the precursor. 6 cysteine pairs are disulfide-bonded: cysteine 45–cysteine 137, cysteine 47–cysteine 63, cysteine 62–cysteine 118, cysteine 69–cysteine 111, cysteine 79–cysteine 104, and cysteine 97–cysteine 109. Positions 46, 48, and 50 each coordinate Ca(2+). Residue histidine 66 is part of the active site. Aspartate 67 lines the Ca(2+) pocket. Aspartate 112 is an active-site residue.

This sequence belongs to the phospholipase A2 family. Group I subfamily. D49 sub-subfamily. As to quaternary structure, heterodimer; disulfide-linked. The A chains have phospholipase A2 activity and the B chains show homology with the basic protease inhibitors. Ca(2+) is required as a cofactor. As to expression, expressed by the venom gland.

Its subcellular location is the secreted. It carries out the reaction a 1,2-diacyl-sn-glycero-3-phosphocholine + H2O = a 1-acyl-sn-glycero-3-phosphocholine + a fatty acid + H(+). In terms of biological role, snake venom phospholipase A2 (PLA2) that inhibits neuromuscular transmission by blocking acetylcholine release from the nerve termini. PLA2 catalyzes the calcium-dependent hydrolysis of the 2-acyl groups in 3-sn-phosphoglycerides. The sequence is that of Basic phospholipase A2 beta-bungarotoxin A-AL3 chain from Bungarus multicinctus (Many-banded krait).